The sequence spans 181 residues: ECF RNA polymerase sigma factor RpoE (181 aa).

The sigma-70 factor domain-2 stretch occupies residues 29-96 (LFQHFAPKVK…RRIDGLRKDR (68 aa)). The Interaction with polymerase core subunit RpoC signature appears at 53–56 (ECAQ). The sigma-70 factor domain-4 stretch occupies residues 129 to 178 (AIARLPEAQRALIERAFFGDLTHRELAAETGLPLGTIKSRIRLALDRLRQ). Positions 151 to 170 (HRELAAETGLPLGTIKSRIR) form a DNA-binding region, H-T-H motif.

The protein belongs to the sigma-70 factor family. ECF subfamily. Interacts transiently with the RNA polymerase catalytic core formed by RpoA, RpoB, RpoC and RpoZ (2 alpha, 1 beta, 1 beta' and 1 omega subunit) to form the RNA polymerase holoenzyme that can initiate transcription. Forms a 1:1 complex (via sigma-70 factor domain 4) with anti-sigma factor ChrR; this inhibits the interaction of RpoE with the RNA polymerase catalytic core.

Its function is as follows. Sigma factors are initiation factors that promote the attachment of RNA polymerase to specific initiation sites and are then released. Extracytoplasmic function (ECF) sigma factors are held in an inactive form by a cognate anti-sigma factor until released. Sigma-E controls a transcriptional response to singlet oxygen, a by-product of photosynthesis; its continuous activity requires constant exposure to singlet oxygen. The regulon has about 180 genes that protect against or repair damage induced by singlet oxygen, including itself and rpoH2, a heat shock-responsive sigma factor. This is ECF RNA polymerase sigma factor RpoE (rpoE) from Cereibacter sphaeroides (strain ATCC 17023 / DSM 158 / JCM 6121 / CCUG 31486 / LMG 2827 / NBRC 12203 / NCIMB 8253 / ATH 2.4.1.) (Rhodobacter sphaeroides).